Reading from the N-terminus, the 251-residue chain is Protein unc-119 homolog B (251 aa).

Residues 1–28 form a disordered region; the sequence is MSGSNPKAAAAASAAGPGGLVAGKEEKK. At Ser-2 the chain carries N-acetylserine. An N6-acetyllysine modification is found at Lys-24. Position 142 (Tyr-142) interacts with tetradecanoate.

This sequence belongs to the PDE6D/unc-119 family. In terms of assembly, found in a complex with ARL3, RP2 and UNC119B; RP2 induces hydrolysis of GTP ARL3 in the complex, leading to the release of UNC119B. Interacts with NPHP3 (when myristoylated). Interacts with CYS1 (when myristoylated). Interacts with MACIR; interaction only takes place when UNC119B is not liganded with myristoylated proteins.

The protein resides in the cell projection. The protein localises to the cilium. Myristoyl-binding protein that acts as a cargo adapter: specifically binds the myristoyl moiety of a subset of N-terminally myristoylated proteins and is required for their localization. Binds myristoylated NPHP3 and plays a key role in localization of NPHP3 to the primary cilium membrane. Does not bind all myristoylated proteins. Probably plays a role in trafficking proteins in photoreceptor cells. In Homo sapiens (Human), this protein is Protein unc-119 homolog B (UNC119B).